The sequence spans 310 residues: Manganese ABC transporter substrate-binding lipoprotein scaA (310 aa).

Residues 1–19 (MKKCRFLVLLLLAFVGLAA) form the signal peptide. Cys20 carries the N-palmitoyl cysteine lipid modification. A lipid anchor (S-diacylglycerol cysteine) is attached at Cys20. Mn(2+)-binding residues include His68, His140, Glu206, and Asp281.

The protein belongs to the bacterial solute-binding protein 9 family. Lipoprotein receptor antigen (Lrai) subfamily. The complex is composed of two ATP-binding proteins (ScaC), two transmembrane proteins (ScaB) and a solute-binding protein (ScaA).

The protein resides in the cell membrane. Functionally, part of ATP-binding cassette (ABC) transport system ScaABC involved in manganese import. Essential for growth under Mn(2+)-limiting conditions. Also acts as an adhesin which is involved on adherence to extracellular matrix. It is an important factor in pathogenesis and infection. This is Manganese ABC transporter substrate-binding lipoprotein scaA from Streptococcus gordonii.